Here is a 286-residue protein sequence, read N- to C-terminus: NAD(P)H azoreductase (286 aa).

NADP(+) contacts are provided by residues 6–11, Arg-31, and 136–141; these read GGTGTI and GFFMQN.

The protein belongs to the NmrA-type oxidoreductase family. Azoreductase type 3 subfamily. In terms of assembly, monomer.

Its function is as follows. Catalyzes the reductive cleavage of azo bond in aromatic azo compounds to the corresponding amines. Uses preferentially NADPH rather than NADH as an electron donor for its activity. The enzyme reductively cleaved Orange II and carboxy-Orange II, and can also reduce several sulfonated structural analogs, which carry a hydroxy group in the 2 position of the naphthol ring. This chain is NAD(P)H azoreductase (azoB), found in Xenophilus azovorans.